The following is a 166-amino-acid chain: Putative methyltransferase Rv1506c (166 aa).

This sequence belongs to the methyltransferase superfamily.

Probably plays a role in host phagosome maturation arrest, as well as a role in the synthesis of acyltrehalose-containing glycolipids. The protein is Putative methyltransferase Rv1506c of Mycobacterium tuberculosis (strain ATCC 25618 / H37Rv).